The following is a 129-amino-acid chain: Small ribosomal subunit protein uS11 (129 aa).

The protein belongs to the universal ribosomal protein uS11 family. In terms of assembly, part of the 30S ribosomal subunit. Interacts with proteins S7 and S18. Binds to IF-3.

Its function is as follows. Located on the platform of the 30S subunit, it bridges several disparate RNA helices of the 16S rRNA. Forms part of the Shine-Dalgarno cleft in the 70S ribosome. This is Small ribosomal subunit protein uS11 from Idiomarina loihiensis (strain ATCC BAA-735 / DSM 15497 / L2-TR).